The chain runs to 167 residues: Thiol peroxidase (167 aa).

A Thioredoxin domain is found at 18-167; the sequence is VKVGDQAPDF…PIEAAKALVK (150 aa). Catalysis depends on Cys-60, which acts as the Cysteine sulfenic acid (-SOH) intermediate. Cys-60 and Cys-94 form a disulfide bridge.

This sequence belongs to the peroxiredoxin family. Tpx subfamily. As to quaternary structure, homodimer.

It catalyses the reaction a hydroperoxide + [thioredoxin]-dithiol = an alcohol + [thioredoxin]-disulfide + H2O. Thiol-specific peroxidase that catalyzes the reduction of hydrogen peroxide and organic hydroperoxides to water and alcohols, respectively. Plays a role in cell protection against oxidative stress by detoxifying peroxides. The chain is Thiol peroxidase from Bacillus subtilis (strain 168).